A 337-amino-acid polypeptide reads, in one-letter code: Anthranilate phosphoribosyltransferase (337 aa).

5-phospho-alpha-D-ribose 1-diphosphate contacts are provided by residues Gly-81, 84-85 (GD), Ser-89, 91-94 (NVST), 109-117 (KHGNRAATS), and Ala-121. Anthranilate is bound at residue Gly-81. Mg(2+) is bound at residue Ser-93. Asn-112 contacts anthranilate. Arg-167 contacts anthranilate. The Mg(2+) site is built by Asp-226 and Glu-227.

It belongs to the anthranilate phosphoribosyltransferase family. In terms of assembly, homodimer. Requires Mg(2+) as cofactor.

The enzyme catalyses N-(5-phospho-beta-D-ribosyl)anthranilate + diphosphate = 5-phospho-alpha-D-ribose 1-diphosphate + anthranilate. Its pathway is amino-acid biosynthesis; L-tryptophan biosynthesis; L-tryptophan from chorismate: step 2/5. In terms of biological role, catalyzes the transfer of the phosphoribosyl group of 5-phosphorylribose-1-pyrophosphate (PRPP) to anthranilate to yield N-(5'-phosphoribosyl)-anthranilate (PRA). This is Anthranilate phosphoribosyltransferase from Methylorubrum extorquens (strain PA1) (Methylobacterium extorquens).